Reading from the N-terminus, the 330-residue chain is Methylthioribose-1-phosphate isomerase (330 aa).

Substrate-binding positions include 49–51 (RGA), R83, and Q179. D220 acts as the Proton donor in catalysis. 230–231 (NK) is a binding site for substrate.

It belongs to the eIF-2B alpha/beta/delta subunits family. MtnA subfamily.

It carries out the reaction 5-(methylsulfanyl)-alpha-D-ribose 1-phosphate = 5-(methylsulfanyl)-D-ribulose 1-phosphate. It functions in the pathway amino-acid biosynthesis; L-methionine biosynthesis via salvage pathway; L-methionine from S-methyl-5-thio-alpha-D-ribose 1-phosphate: step 1/6. Catalyzes the interconversion of methylthioribose-1-phosphate (MTR-1-P) into methylthioribulose-1-phosphate (MTRu-1-P). This is Methylthioribose-1-phosphate isomerase from Thermus thermophilus (strain ATCC 27634 / DSM 579 / HB8).